Reading from the N-terminus, the 149-residue chain is Active regulator of SIRT1 (149 aa).

Residues 1-64 (MSVSLLRKGL…GLRHDQKATA (64 aa)) form a disordered region. Positions 8 to 19 (KGLDLLREERSG) are enriched in basic and acidic residues. Residues 30 to 41 (SSKPKPCLSSSK) show a composition bias toward low complexity. Positions 43 to 52 (GMRKQLRRLK) are enriched in basic residues.

This sequence belongs to the AROS family. Part of the small subunit (SSU) processome, composed of more than 70 proteins and the RNA chaperone small nucleolar RNA (snoRNA) U3.

Its subcellular location is the nucleus. The protein resides in the nucleolus. In terms of biological role, part of the small subunit (SSU) processome, first precursor of the small eukaryotic ribosomal subunit. During the assembly of the SSU processome in the nucleolus, many ribosome biogenesis factors, an RNA chaperone and ribosomal proteins associate with the nascent pre-rRNA and work in concert to generate RNA folding, modifications, rearrangements and cleavage as well as targeted degradation of pre-ribosomal RNA by the RNA exosome. Acts as a chaperone that specifically mediates the integration of RPS19 in state post-A1. Direct regulator of SIRT1. This is Active regulator of SIRT1 (rps19bp1) from Xenopus tropicalis (Western clawed frog).